The following is a 501-amino-acid chain: Cytochrome P450 monooxygenase janQ (501 aa).

A helical membrane pass occupies residues 1-16; it reads MVLGLLAFIWLMRAWR. The N-linked (GlcNAc...) asparagine glycan is linked to asparagine 132. Cysteine 439 contributes to the heme binding site.

Belongs to the cytochrome P450 family. Heme serves as cofactor.

The protein localises to the membrane. Its pathway is secondary metabolite biosynthesis. Its function is as follows. Cytochrome P450 monooxygenase; part of the gene cluster that mediates the biosynthesis of the indole diterpenes janthitremanes such as shearinine K or shearinine A. The geranylgeranyl diphosphate (GGPP) synthase janG catalyzes the first step in janthitremane biosynthesis via conversion of farnesyl pyrophosphate and isopentyl pyrophosphate into geranylgeranyl pyrophosphate (GGPP). Condensation of indole-3-glycerol phosphate with GGPP by the prenyl transferase janC then forms 3-geranylgeranylindole (3-GGI). Epoxidation by the FAD-dependent monooxygenase janM leads to a epoxidized-GGI that is substrate of the terpene cyclase janB for cyclization to yield paspaline. Paspaline is subsequently converted to 13-desoxypaspaline by the cytochrome P450 monooxygenase janP, via beta-PC-M6 in a series of alpha-face oxidations. The cytochrome P450 monooxygenase janQ is proposed to carry out sequential beta-face oxidation steps at C-7 and C-13 of 13-desoxypaspaline to form paspalicine and paspalinine respectively. The indole diterpene prenyltransferase janD may then convert paspalinine into shearinine K which is substrate of janO and/or additional enzymes for oxidation and cyclization to generate shearinine A. The sequence is that of Cytochrome P450 monooxygenase janQ from Penicillium janthinellum (Penicillium vitale).